Here is a 421-residue protein sequence, read N- to C-terminus: MFSFFRRKKKQETPALEEAQIQETAAKAESETAQVIENIKEDAESLAESVKGQVESAVETVSGAVEQVKEAVAEMLSEAEEAAEKAAEQVEAAKEAIAETVGEAVGQVQEAVATTEEHKLGWAARLKQGLTKSRDKMAKSLAGVFGGGQIDEDLYEELETVLITSDMGMEATEYLMKDVRDRVSLKGLKDGNELRGALKEALYDLIKPLEKPLVLPETKEPFVIMLAGINGAGKTTSIGKLAKYFQAQGKSVLLAAGDTFRAAAREQLQAWGERNNVTVISQTTGDSAAVCFDAVQAAKARGIDIVLADTAGRLPTQLHLMEEIKKVKRVLQKAMPDAPHEIIVVLDANIGQNAVNQVKAFDDALGLTGLIVTKLDGTAKGGILAALASDRPVPVRYIGVGEGIDDLRPFDARAFVDALLD.

Residues M1–K10 are compositionally biased toward basic residues. Residues M1–E31 are disordered. Residues G228–T235, D309–R313, and T373–D376 contribute to the GTP site.

This sequence belongs to the GTP-binding SRP family. FtsY subfamily. As to quaternary structure, part of the signal recognition particle protein translocation system, which is composed of SRP and FtsY. SRP is a ribonucleoprotein composed of Ffh and a 4.5S RNA molecule.

It localises to the cell inner membrane. It is found in the cytoplasm. It catalyses the reaction GTP + H2O = GDP + phosphate + H(+). Involved in targeting and insertion of nascent membrane proteins into the cytoplasmic membrane. Acts as a receptor for the complex formed by the signal recognition particle (SRP) and the ribosome-nascent chain (RNC). Interaction with SRP-RNC leads to the transfer of the RNC complex to the Sec translocase for insertion into the membrane, the hydrolysis of GTP by both Ffh and FtsY, and the dissociation of the SRP-FtsY complex into the individual components. The protein is Signal recognition particle receptor FtsY of Neisseria meningitidis serogroup A / serotype 4A (strain DSM 15465 / Z2491).